The chain runs to 425 residues: UDP-N-acetylglucosamine 1-carboxyvinyltransferase (425 aa).

24–25 lines the phosphoenolpyruvate pocket; that stretch reads KN. Arginine 95 contributes to the UDP-N-acetyl-alpha-D-glucosamine binding site. Cysteine 119 (proton donor) is an active-site residue. At cysteine 119 the chain carries 2-(S-cysteinyl)pyruvic acid O-phosphothioketal. UDP-N-acetyl-alpha-D-glucosamine is bound by residues 124-128, aspartate 308, and valine 330; that span reads RPVDQ.

This sequence belongs to the EPSP synthase family. MurA subfamily.

It localises to the cytoplasm. It carries out the reaction phosphoenolpyruvate + UDP-N-acetyl-alpha-D-glucosamine = UDP-N-acetyl-3-O-(1-carboxyvinyl)-alpha-D-glucosamine + phosphate. The protein operates within cell wall biogenesis; peptidoglycan biosynthesis. In terms of biological role, cell wall formation. Adds enolpyruvyl to UDP-N-acetylglucosamine. The chain is UDP-N-acetylglucosamine 1-carboxyvinyltransferase from Deinococcus deserti (strain DSM 17065 / CIP 109153 / LMG 22923 / VCD115).